A 241-amino-acid polypeptide reads, in one-letter code: uncharacterized protein (241 aa).

One can recognise a Cupin type-2 domain in the interval 22–78 (SHKHAYSQFLFPLEGSIDLETEGRQVKLNPDHFLYIPPQCEHRFRSIGRNECLVLDV). Residues 137–235 (YASIAYIHSH…GMPPRLYRNT (99 aa)) enclose the HTH araC/xylS-type domain. 2 DNA-binding regions (H-T-H motif) span residues 154–175 (KKLA…KKQT) and 202–225 (LTVV…TKST).

This is an uncharacterized protein from Bacillus subtilis (strain 168).